The sequence spans 246 residues: Dehydration-responsive element-binding protein 1H (246 aa).

The segment at 1-43 (MDMAGHEVNSSSSSSGAESSSSSSGRQQYKKRPAGRTKFRETR) is disordered. A compositionally biased stretch (low complexity) spans 10-24 (SSSSSSGAESSSSSS). Residues 28-37 (QYKKRPAGRT) are compositionally biased toward basic residues. The AP2/ERF DNA-binding region spans 46-110 (VYRGVRRRGG…GGGAACLNFQ (65 aa)). The segment at 155 to 187 (AMDEATSGVSAPPPLANNAGSSETPGPSSIDGT) is disordered. Residues 172–181 (NAGSSETPGP) show a composition bias toward polar residues.

It belongs to the AP2/ERF transcription factor family. ERF subfamily.

The protein resides in the nucleus. Its function is as follows. Transcriptional activator that binds specifically to the DNA sequence 5'-[AG]CCGAC-3'. Binding to the C-repeat/DRE element mediates high salinity- and dehydration-inducible transcription. This is Dehydration-responsive element-binding protein 1H (DREB1H) from Oryza sativa subsp. indica (Rice).